The primary structure comprises 390 residues: MSDKDEFAAKKKDLVNTPVDLYPPENPMLGPSPMMDSFRETLWHDGGFNVHTDADTSFRGNNNIDIPLEMGWNMAQFPADSGFIERAAKFSFFGCGEMMMNQQQSSLGVPDSTGLFLQDTQIPSGSKLDNGPLTDASKLVKERSINNVSEDSQSSGGNGHDDAKCGQTSSKGFSSKKRKRIGKDCEEEEDKKQKDEQSPTSNANKTNSEKQPSDSLKDGYIHMRARRGQATNSHSLAERVRREKISERMKFLQDLVPGCDKVTGKAVMLDEIINYVQSLQCQIEFLSMKLSAVNPVLDFNLESLLAKDALQSSAPTFPHNMSMLYPPVSYLSQTGFMQPNISSMSLLSGGLKRQETHGYESDHHNLVHMNHETGTAPDHEDTTADMKVEP.

The tract at residues 147 to 217 (NVSEDSQSSG…SEKQPSDSLK (71 aa)) is disordered. Basic and acidic residues predominate over residues 207–217 (NSEKQPSDSLK). One can recognise a bHLH domain in the interval 229–279 (QATNSHSLAERVRREKISERMKFLQDLVPGCDKVTGKAVMLDEIINYVQSL).

As to quaternary structure, homodimer. Interacts with IBH1. Binds reversibly to CRY2 after blue light illumination. As to expression, expressed constitutively in roots, leaves, stems, and flowers.

Its subcellular location is the nucleus. Its function is as follows. Transcriptional activator involved in cell elongation. Regulates the expression of a subset of genes involved in cell expansion by binding to the G-box motif. Binds to chromatin DNA of the FT gene and promotes its expression, and thus triggers flowering in response to blue light. The sequence is that of Transcription factor bHLH76 (BHLH76) from Arabidopsis thaliana (Mouse-ear cress).